The primary structure comprises 130 residues: Small ribosomal subunit protein uS9 (130 aa).

This sequence belongs to the universal ribosomal protein uS9 family.

The sequence is that of Small ribosomal subunit protein uS9 from Anoxybacillus flavithermus (strain DSM 21510 / WK1).